The following is a 454-amino-acid chain: uncharacterized protein (454 aa).

The N-terminal stretch at 1 to 18 is a signal peptide; that stretch reads MRRFTLFVFFLSISIAYA.

This is an uncharacterized protein from Caenorhabditis elegans.